The following is a 525-amino-acid chain: Serine/threonine-protein kinase YPK3 (525 aa).

2 positions are modified to phosphoserine: serine 90 and serine 105. The residue at position 107 (threonine 107) is a Phosphothreonine. Residues 128–424 (FKPVRVLGQG…KTGANNKPTK (297 aa)) form the Protein kinase domain. ATP-binding positions include 134-142 (LGQGAYGKV) and lysine 157. The interval 170 to 193 (ATDSKREDEDKNDGNNNDNDDGLS) is disordered. A compositionally biased stretch (basic and acidic residues) spans 172 to 182 (DSKREDEDKND). Aspartate 277 functions as the Proton acceptor in the catalytic mechanism. At serine 321 the chain carries Phosphoserine; by PKH1 or PKH2. Residues 445 to 524 (RKIDWKLLES…KASGSYLEKY (80 aa)) enclose the AGC-kinase C-terminal domain. Residue threonine 490 is modified to Phosphothreonine; by TORC1. Serine 513 carries the phosphoserine; by TORC1 modification.

It belongs to the protein kinase superfamily. AGC Ser/Thr protein kinase family. S6 kinase subfamily. Post-translationally, phosphorylated by PKA in a TORC1-dependent manner. Phosphorylation at PKA consensus sites RRxS/T decreases upon rapamycin treatment.

It localises to the cytoplasm. The catalysed reaction is L-seryl-[protein] + ATP = O-phospho-L-seryl-[protein] + ADP + H(+). It carries out the reaction L-threonyl-[protein] + ATP = O-phospho-L-threonyl-[protein] + ADP + H(+). AGC kinase which plays a role in TOR complex 1 (TORC1) signaling pathway which mediates temporal control of cell growth in response to nutrients. Required for phosphorylation of ribosomal protein S6 (RPS6A/RPS6B) at 'Ser-232' and 'Ser-233'. The chain is Serine/threonine-protein kinase YPK3 from Saccharomyces cerevisiae (strain ATCC 204508 / S288c) (Baker's yeast).